Reading from the N-terminus, the 308-residue chain is MNPPSSIKHYLQFKDFSLEEYEYLLDRSAILKAKFKNYETWHPLHDRTLAMIFEKNSTRTRLSFEAGIHQLGGHAVFLNTRDSQLGRGEPIEDAAQVISRMTDIIMIRTFGQEIIERFAAHSRVPVINGLTNEYHPCQVLADIFTFIEQRGPIKGKTVTWVGDANNMAYTWVQAAEILGFRFHFSAPKGYQLDPAMVADSALPFVHVFENPLEACDGAHLVTTDVWTSMGYEAENEARKKAFGDWMVTEAMMQRAQPDALFMHCLPAHRGEEVEAAVIDGKQSVVWDEAENRLHVQKALMEYLLCGRY.

Residues 57 to 60, Gln-84, Arg-108, and 135 to 138 each bind carbamoyl phosphate; these read STRT and HPCQ. L-ornithine-binding positions include Asn-166, Asp-224, and 228 to 229; that span reads SM. Residues 264-265 and Arg-292 each bind carbamoyl phosphate; that span reads CL.

Belongs to the aspartate/ornithine carbamoyltransferase superfamily. OTCase family.

The protein resides in the cytoplasm. The catalysed reaction is carbamoyl phosphate + L-ornithine = L-citrulline + phosphate + H(+). It participates in amino-acid degradation; L-arginine degradation via ADI pathway; carbamoyl phosphate from L-arginine: step 2/2. In terms of biological role, reversibly catalyzes the transfer of the carbamoyl group from carbamoyl phosphate (CP) to the N(epsilon) atom of ornithine (ORN) to produce L-citrulline. This is Ornithine carbamoyltransferase from Ralstonia pickettii (strain 12J).